The primary structure comprises 721 residues: Polyribonucleotide nucleotidyltransferase (721 aa).

Mg(2+) contacts are provided by Asp495 and Asp501. The region spanning 562 to 621 (PRLLSFRIDPELIGTVIGPGGRTIKGITERTNTKIDIEDGGIVTIASHDGAAAEEAQKII) is the KH domain. An S1 motif domain is found at 631 to 699 (GEIFPGVVTR…SRGRINLTLR (69 aa)). The tract at residues 702-721 (GQNGGMSYPEPTPTPVAPLS) is disordered. Over residues 711 to 721 (EPTPTPVAPLS) the composition is skewed to pro residues.

Belongs to the polyribonucleotide nucleotidyltransferase family. It depends on Mg(2+) as a cofactor.

Its subcellular location is the cytoplasm. The catalysed reaction is RNA(n+1) + phosphate = RNA(n) + a ribonucleoside 5'-diphosphate. In terms of biological role, involved in mRNA degradation. Catalyzes the phosphorolysis of single-stranded polyribonucleotides processively in the 3'- to 5'-direction. This is Polyribonucleotide nucleotidyltransferase from Prochlorococcus marinus (strain MIT 9301).